The chain runs to 566 residues: Arginine--tRNA ligase (566 aa).

Residues 123-133 (PNIAKPFHIGH) carry the 'HIGH' region motif.

The protein belongs to the class-I aminoacyl-tRNA synthetase family. Monomer.

Its subcellular location is the cytoplasm. The enzyme catalyses tRNA(Arg) + L-arginine + ATP = L-arginyl-tRNA(Arg) + AMP + diphosphate. The protein is Arginine--tRNA ligase of Halothermothrix orenii (strain H 168 / OCM 544 / DSM 9562).